We begin with the raw amino-acid sequence, 520 residues long: Non-specific phospholipase C6 (520 aa).

The signal sequence occupies residues 1-31 (MKPSSASRFSLTFSHFLTLYCLLTQTHVAQG).

Belongs to the bacterial phospholipase C family. As to expression, expressed in roots, leaves, stems, flowers and siliques.

It is found in the secreted. This Arabidopsis thaliana (Mouse-ear cress) protein is Non-specific phospholipase C6 (NPC6).